Consider the following 926-residue polypeptide: Beta-mannosidase A (926 aa).

A signal peptide spans 1–21; that stretch reads MHVKAETVLALLTPAPPSVVG. Residues Asn-40, Asn-242, Asn-277, Asn-311, and Asn-342 are each glycosylated (N-linked (GlcNAc...) asparagine). Glu-474 serves as the catalytic Proton donor. Residues Asn-532, Asn-603, Asn-626, Asn-653, Asn-733, Asn-756, Asn-785, Asn-793, Asn-819, and Asn-905 are each glycosylated (N-linked (GlcNAc...) asparagine).

It belongs to the glycosyl hydrolase 2 family. Beta-mannosidase A subfamily. In terms of assembly, homodimer.

The protein resides in the secreted. It catalyses the reaction Hydrolysis of terminal, non-reducing beta-D-mannose residues in beta-D-mannosides.. It functions in the pathway glycan metabolism; N-glycan degradation. Exoglycosidase that cleaves the single beta-linked mannose residue from the non-reducing end of beta-mannosidic oligosaccharides of various complexity and length. Involved in the degradation of polymeric mannan and galactomannan. The chain is Beta-mannosidase A (mndA) from Aspergillus fumigatus (strain ATCC MYA-4609 / CBS 101355 / FGSC A1100 / Af293) (Neosartorya fumigata).